The sequence spans 240 residues: MNKPLFIALDYDDQEKMWLFLNQLKDKQGLHVKLGMEMFYQYGPEIVRDLSAKGYQIFLDLKLHDIPNTVKRTAHQLAALGVYCTTVHALGGKQMIQAAKEGLIEGTPAGKPVPKLLAVTELTSISEEVLKNEQHCSLNLADEVKSLAHQAQEAEADGIICSPLEVKAMKSEFSDDFMFVTPGIRPKSYQKDDQARVATPGQARENGSTAIVVGRPITQAADPQKAYEEILKDWSKNDAK.

Substrate is bound by residues Asp-10, Lys-33, 60–69, Thr-123, Arg-185, Gln-194, Gly-214, and Arg-215; that span reads DLKLHDIPNT. The Proton donor role is filled by Lys-62.

It belongs to the OMP decarboxylase family. Type 1 subfamily. In terms of assembly, homodimer.

The catalysed reaction is orotidine 5'-phosphate + H(+) = UMP + CO2. Its pathway is pyrimidine metabolism; UMP biosynthesis via de novo pathway; UMP from orotate: step 2/2. Its function is as follows. Catalyzes the decarboxylation of orotidine 5'-monophosphate (OMP) to uridine 5'-monophosphate (UMP). This chain is Orotidine 5'-phosphate decarboxylase, found in Lactobacillus delbrueckii subsp. bulgaricus (strain ATCC 11842 / DSM 20081 / BCRC 10696 / JCM 1002 / NBRC 13953 / NCIMB 11778 / NCTC 12712 / WDCM 00102 / Lb 14).